The primary structure comprises 479 residues: F-box/LRR-repeat protein 16 (479 aa).

A disordered region spans residues 1 to 62 (MSSPGIDGDP…PTLPPPSLAA (62 aa)). The segment covering 47 to 60 (CQPPPPPTLPPPSL) has biased composition (pro residues). Position 92 is an omega-N-methylarginine (Arg-92). One can recognise an F-box domain in the interval 94–139 (PLATDEKILNGLFWYFSACEKCVLAQVCKAWRRVLYQPKFWAGLTP). LRR repeat units follow at residues 244-266 (ITSL…ISQL), 267-290 (LPNL…YFTA), 319-343 (LPNL…LVAE), 345-369 (LRKL…YVAC), 371-395 (LHRL…YLST), 396-420 (MSSL…HLLA), and 446-470 (LQEL…YFSQ).

In terms of assembly, interacts with SKP1 and CUL1.

Functionally, substrate-recognition component of the SCF (SKP1-CUL1-F-box protein)-type E3 ubiquitin ligase complex. This Homo sapiens (Human) protein is F-box/LRR-repeat protein 16 (FBXL16).